A 589-amino-acid chain; its full sequence is Kelch-like protein 25 (589 aa).

The region spanning 46-114 (TDVTLWAGDR…AYSSRIVINE (69 aa)) is the BTB domain. One can recognise a BACK domain in the interval 149-250 (CLGMMVLSDA…LPSDCLKKAV (102 aa)). 6 Kelch repeats span residues 296 to 340 (TLLI…AIGC), 341 to 388 (KVYV…ELEN), 389 to 444 (CLYV…SAKL), 446 to 492 (LFVF…VLGS), 493 to 538 (QIFI…ASGN), and 539 to 585 (KLYV…STWK).

As to quaternary structure, component of the BCR(KLHL25) E3 ubiquitin ligase complex, at least composed of CUL3, KLHL25 and RBX1.

It participates in protein modification; protein ubiquitination. Its function is as follows. Substrate-specific adapter of a BCR (BTB-CUL3-RBX1) E3 ubiquitin ligase complex involved in various processes, such as translation homeostasis and lipid synthesis. The BCR(KLHL25) ubiquitin ligase complex acts by mediating ubiquitination of hypophosphorylated EIF4EBP1 (4E-BP1): ubiquitination and subsequent degradation of hypophosphorylated EIF4EBP1 (4E-BP1) probably serves as a homeostatic mechanism to maintain translation and prevent eIF4E inhibition when eIF4E levels are low. The BCR(KLHL25) complex does not target EIF4EBP1 (4E-BP1) when it is hyperphosphorylated or associated with eIF4E. The BCR(KLHL25) complex also acts as a regulator of lipid synthesis by mediating ubiquitination and degradation of ACLY, thereby inhibiting lipid synthesis. BCR(KLHL25)-mediated degradation of ACLY promotes fatty acid oxidation and is required for differentiation of inducible regulatory T (iTreg) cells. This chain is Kelch-like protein 25, found in Rattus norvegicus (Rat).